The following is a 154-amino-acid chain: Troponin C, isoallergen Bla g 6.0301 (154 aa).

4 EF-hand domains span residues 11–46 (EQIS…MGQP), 47–82 (FNRR…FIIE), 87–122 (AMEK…LDEQ), and 123–154 (LTSD…MMTG). Positions 60, 62, 64, 66, and 71 each coordinate Ca(2+). Asp136, Asp138, Ser140, Thr142, and Glu147 together coordinate Ca(2+).

This sequence belongs to the troponin C family.

Its function is as follows. Troponin is the central regulatory protein of striated muscle contraction. It consists of three components: Troponin-I (Tn-I) which is the inhibitor of actomyosin ATPase, Troponin-T (Tn-T) which contains the binding site for tropomyosin and Troponin-C (Tn-C). The binding of calcium to Tn-C abolishes the inhibitory action of Tn on actin filaments. This chain is Troponin C, isoallergen Bla g 6.0301, found in Blattella germanica (German cockroach).